We begin with the raw amino-acid sequence, 348 residues long: Major outer membrane protein (348 aa).

The N-terminal stretch at 1-20 (MKKTIVALAVAAVAATSANA) is a signal peptide.

In terms of assembly, disulfide bond interactions within and between MOMP molecules and other components form high molecular-weight oligomers.

The protein resides in the cell outer membrane. Structural rigidity of the outer membrane of elementary bodies and porin forming, permitting diffusion of solutes through the intracellular reticulate body membrane. The protein is Major outer membrane protein (ompH) of Pasteurella multocida (strain Pm70).